Consider the following 305-residue polypeptide: Catechol 1,2-dioxygenase (305 aa).

Residues Tyr163, Tyr197, His221, and His223 each contribute to the Fe cation site.

It belongs to the intradiol ring-cleavage dioxygenase family. In terms of assembly, homodimer. Requires Fe(3+) as cofactor.

It catalyses the reaction catechol + O2 = cis,cis-muconate + 2 H(+). Its pathway is aromatic compound metabolism; beta-ketoadipate pathway; 5-oxo-4,5-dihydro-2-furylacetate from catechol: step 1/3. This is Catechol 1,2-dioxygenase (catA) from Acinetobacter guillouiae (Acinetobacter genomosp. 11).